The sequence spans 249 residues: 1-(5-phosphoribosyl)-5-[(5-phosphoribosylamino)methylideneamino] imidazole-4-carboxamide isomerase (249 aa).

Asp-8 serves as the catalytic Proton acceptor. Asp-129 functions as the Proton donor in the catalytic mechanism.

Belongs to the HisA/HisF family.

It is found in the cytoplasm. The catalysed reaction is 1-(5-phospho-beta-D-ribosyl)-5-[(5-phospho-beta-D-ribosylamino)methylideneamino]imidazole-4-carboxamide = 5-[(5-phospho-1-deoxy-D-ribulos-1-ylimino)methylamino]-1-(5-phospho-beta-D-ribosyl)imidazole-4-carboxamide. It functions in the pathway amino-acid biosynthesis; L-histidine biosynthesis; L-histidine from 5-phospho-alpha-D-ribose 1-diphosphate: step 4/9. This chain is 1-(5-phosphoribosyl)-5-[(5-phosphoribosylamino)methylideneamino] imidazole-4-carboxamide isomerase, found in Magnetococcus marinus (strain ATCC BAA-1437 / JCM 17883 / MC-1).